Reading from the N-terminus, the 251-residue chain is 5'-nucleotidase SurE (251 aa).

Aspartate 8, aspartate 9, serine 39, and asparagine 91 together coordinate a divalent metal cation.

This sequence belongs to the SurE nucleotidase family. A divalent metal cation serves as cofactor.

It is found in the cytoplasm. The enzyme catalyses a ribonucleoside 5'-phosphate + H2O = a ribonucleoside + phosphate. Its function is as follows. Nucleotidase that shows phosphatase activity on nucleoside 5'-monophosphates. The polypeptide is 5'-nucleotidase SurE (Methylococcus capsulatus (strain ATCC 33009 / NCIMB 11132 / Bath)).